Reading from the N-terminus, the 198-residue chain is Imidazoleglycerol-phosphate dehydratase (198 aa).

This sequence belongs to the imidazoleglycerol-phosphate dehydratase family.

The protein localises to the cytoplasm. It catalyses the reaction D-erythro-1-(imidazol-4-yl)glycerol 3-phosphate = 3-(imidazol-4-yl)-2-oxopropyl phosphate + H2O. It participates in amino-acid biosynthesis; L-histidine biosynthesis; L-histidine from 5-phospho-alpha-D-ribose 1-diphosphate: step 6/9. The sequence is that of Imidazoleglycerol-phosphate dehydratase from Methylobacillus flagellatus (strain ATCC 51484 / DSM 6875 / VKM B-1610 / KT).